Reading from the N-terminus, the 136-residue chain is Large ribosomal subunit protein uL16 (136 aa).

The protein belongs to the universal ribosomal protein uL16 family. As to quaternary structure, part of the 50S ribosomal subunit.

Binds 23S rRNA and is also seen to make contacts with the A and possibly P site tRNAs. This chain is Large ribosomal subunit protein uL16, found in Pasteurella multocida (strain Pm70).